The following is a 360-amino-acid chain: Mannose-1-phosphate guanylyltransferase catalytic subunit beta (360 aa).

The substrate-binding domain stretch occupies residues 2–222 (KALILVGGYG…QGFWMDIGQP (221 aa)). Aspartate 110 lines the GDP-alpha-D-mannose pocket. Aspartate 110 lines the Mg(2+) pocket. Lysine 162 is a catalytic residue. Aspartate 218 provides a ligand contact to GDP-alpha-D-mannose. Positions 245–360 (YSGPGIVGNV…ESVPEPRIIM (116 aa)) are hexapeptide repeat domain.

Belongs to the transferase hexapeptide repeat family. Component of the GMPPA-GMPPB mannose-1-phosphate guanylyltransferase complex composed of 4 GMPPA subunits and 8 GMPPB subunits; the complex is organized into three layers, a central layer made up of 2 GMPPA dimers sandwiched between two layers each made up of 2 GMPPB dimers. GMPPB catalytic activity is reduced when part of the complex and binding of GDP-alpha-D-Mannose by GMPPA induces allosteric feedback inhibition of GMPPB. It depends on Mg(2+) as a cofactor.

It localises to the cytoplasm. The enzyme catalyses alpha-D-mannose 1-phosphate + GTP + H(+) = GDP-alpha-D-mannose + diphosphate. The protein operates within nucleotide-sugar biosynthesis; GDP-alpha-D-mannose biosynthesis; GDP-alpha-D-mannose from alpha-D-mannose 1-phosphate (GTP route): step 1/1. Enzyme activity is reduced by incorporation into the GMPPA-GMPPB mannose-1-phosphate guanylyltransferase complex. Allosterically inhibited, when part of the GMPPA-GMPPB complex, by GDP-alpha-D-mannose binding to GMPPA. Functionally, catalytic subunit of the GMPPA-GMPPB mannose-1-phosphate guanylyltransferase complex. Catalyzes the formation of GDP-mannose, an essential precursor of glycan moieties of glycoproteins and glycolipids. Can catalyze the reverse reaction in vitro. Together with GMPPA regulates GDP-alpha-D-mannose levels. The polypeptide is Mannose-1-phosphate guanylyltransferase catalytic subunit beta (Mus musculus (Mouse)).